The following is a 401-amino-acid chain: Exodeoxyribonuclease 7 large subunit (401 aa).

Belongs to the XseA family. In terms of assembly, heterooligomer composed of large and small subunits.

It is found in the cytoplasm. The catalysed reaction is Exonucleolytic cleavage in either 5'- to 3'- or 3'- to 5'-direction to yield nucleoside 5'-phosphates.. Functionally, bidirectionally degrades single-stranded DNA into large acid-insoluble oligonucleotides, which are then degraded further into small acid-soluble oligonucleotides. The chain is Exodeoxyribonuclease 7 large subunit from Lachnoclostridium phytofermentans (strain ATCC 700394 / DSM 18823 / ISDg) (Clostridium phytofermentans).